We begin with the raw amino-acid sequence, 241 residues long: MAADEELSGVWQARVVTLFPDAFPGVLGLSLTGKALQDGRWQLHTHDLRSFGVGKHRNVDDTPAGGGAGMVMRADVVGPAIEAAQRFARGRWPILYMSPRGRPFTQKMAKDLARCDGVTVLCGRFEGVDERVLEHFGVTEVSIGDYVLTGGEIAAQTVLDATVRLLPGVLGNAESTVEESHSNGLLEHPQYTRPAIWEGHAIPEVLMSGNHAEIAKWRAAQSHRLTQSRRPDLWAAKGAKE.

Residues glycine 123 and 143-148 (IGDYVL) each bind S-adenosyl-L-methionine.

This sequence belongs to the RNA methyltransferase TrmD family. In terms of assembly, homodimer.

The protein localises to the cytoplasm. The catalysed reaction is guanosine(37) in tRNA + S-adenosyl-L-methionine = N(1)-methylguanosine(37) in tRNA + S-adenosyl-L-homocysteine + H(+). Specifically methylates guanosine-37 in various tRNAs. This Roseobacter denitrificans (strain ATCC 33942 / OCh 114) (Erythrobacter sp. (strain OCh 114)) protein is tRNA (guanine-N(1)-)-methyltransferase.